A 470-amino-acid chain; its full sequence is Acetyl-CoA decarbonylase/synthase complex subunit beta 2 (470 aa).

Positions 190, 193, 279, and 281 each coordinate [Ni-Fe-S] cluster.

It belongs to the CdhC family. In terms of assembly, monomer. The ACDS complex is made up of alpha, epsilon, beta, gamma and delta chains with a probable stoichiometry of (alpha(2)epsilon(2))(4)-beta(8)-(gamma(1)delta(1))(8) (Potential). It depends on [Ni-Fe-S] cluster as a cofactor.

It catalyses the reaction Co(I)-[corrinoid Fe-S protein] + acetyl-CoA + H(+) = methyl-Co(III)-[corrinoid Fe-S protein] + CO + CoA. Its pathway is one-carbon metabolism; methanogenesis from acetate. In terms of biological role, part of a complex that catalyzes the reversible cleavage of acetyl-CoA, allowing growth on acetate as sole source of carbon and energy. The alpha-epsilon complex generates CO from CO(2), while the beta subunit (this protein) combines the CO with CoA and a methyl group to form acetyl-CoA. The methyl group, which is incorporated into acetyl-CoA, is transferred to the beta subunit by a corrinoid iron-sulfur protein (the gamma-delta complex). This chain is Acetyl-CoA decarbonylase/synthase complex subunit beta 2 (cdhC2), found in Methanosarcina mazei (strain ATCC BAA-159 / DSM 3647 / Goe1 / Go1 / JCM 11833 / OCM 88) (Methanosarcina frisia).